Consider the following 87-residue polypeptide: UPF0335 protein Meso_3367 (87 aa).

The protein belongs to the UPF0335 family.

The chain is UPF0335 protein Meso_3367 from Chelativorans sp. (strain BNC1).